The primary structure comprises 149 residues: Internal scaffolding protein ORF3 (149 aa).

The protein belongs to the microvidae B protein family.

The protein resides in the host cytoplasm. Functionally, participates in the assembly of the viral procapsid in the cytoplasm. Released from the procapsid upon genome packaging, possibly through affinity displacement by the protein ORF8, or by proteolysis. The sequence is that of Internal scaffolding protein ORF3 from Spiroplasma virus 4 (SpV4).